The chain runs to 429 residues: Small ribosomal subunit protein uS5m (429 aa).

The segment at A108–N127 is disordered. The segment covering K111–D125 has biased composition (basic residues). The S5 DRBM domain maps to F218–I282.

This sequence belongs to the universal ribosomal protein uS5 family. Component of the mitochondrial ribosome small subunit (28S) which comprises a 12S rRNA and about 30 distinct proteins.

It localises to the mitochondrion. In Pongo abelii (Sumatran orangutan), this protein is Small ribosomal subunit protein uS5m (MRPS5).